Here is a 213-residue protein sequence, read N- to C-terminus: Gas vesicle protein F1 (213 aa).

The protein belongs to the gas vesicle GvpF/GvpL family. Binds GvpA1 in early growth stages; is the only one of GvpF1 to GvpM1 that interacts with GvpA1 in H.volcanii experiments. GvpF to GvpM interact with each other in vitro, and may form multi-subunit complex(es). Interacts with GvpC1 and GvpO1.

The protein resides in the gas vesicle. Its subcellular location is the cytoplasm. Functionally, might be involved in preventing aggregation of GvpA1. Proteins GvpF to GvpM might be involved in nucleating gas vesicle formation. A minor component of the gas vesicle, also found in soluble extracts. Gas vesicles are hollow, gas filled proteinaceous nanostructures found in several microbial planktonic microorganisms. They allow positioning of halobacteria at the optimal depth for growth in the poorly aerated, shallow brine pools of their habitat. Its function is as follows. Expression of a 9.5 kb p-vac DNA fragment containing 2 divergently transcribed regions (gvpD-gvpE-gvpF-gvpG-gvpH-gvpI-gvpJ-gvpK-gvpL-gvpM and gvpA-gvpC-gvpN-gvpO) allows H.volcanii to produce gas vesicles. A minimal gas vesicle can be made in H.volcanii by gvpA1-gvpO1 plus gvpF1-gvpG1-gvpJ1-gvpK1-gvpL1-gvpM1; lack of enough GvpJ1 prevents formation. The same region restores gas vesicle production in H.halobium without the p-vac locus. The sequence is that of Gas vesicle protein F1 (gvpF11) from Halobacterium salinarum (strain ATCC 700922 / JCM 11081 / NRC-1) (Halobacterium halobium).